We begin with the raw amino-acid sequence, 483 residues long: UDP-N-acetylmuramoyl-L-alanyl-D-glutamate--2,6-diaminopimelate ligase (483 aa).

Ser29 is a binding site for UDP-N-acetyl-alpha-D-muramoyl-L-alanyl-D-glutamate. Residue Gly112–Thr118 coordinates ATP. UDP-N-acetyl-alpha-D-muramoyl-L-alanyl-D-glutamate is bound by residues Thr154 to Thr155, Ser181, and Arg189. Residue Lys221 is modified to N6-carboxylysine. Meso-2,6-diaminopimelate-binding positions include Arg380, Asp404–Arg407, Gly454, and Glu458. Positions Asp404–Arg407 match the Meso-diaminopimelate recognition motif motif.

It belongs to the MurCDEF family. MurE subfamily. It depends on Mg(2+) as a cofactor. Carboxylation is probably crucial for Mg(2+) binding and, consequently, for the gamma-phosphate positioning of ATP.

It is found in the cytoplasm. The catalysed reaction is UDP-N-acetyl-alpha-D-muramoyl-L-alanyl-D-glutamate + meso-2,6-diaminopimelate + ATP = UDP-N-acetyl-alpha-D-muramoyl-L-alanyl-gamma-D-glutamyl-meso-2,6-diaminopimelate + ADP + phosphate + H(+). The protein operates within cell wall biogenesis; peptidoglycan biosynthesis. Catalyzes the addition of meso-diaminopimelic acid to the nucleotide precursor UDP-N-acetylmuramoyl-L-alanyl-D-glutamate (UMAG) in the biosynthesis of bacterial cell-wall peptidoglycan. The sequence is that of UDP-N-acetylmuramoyl-L-alanyl-D-glutamate--2,6-diaminopimelate ligase from Clostridium botulinum (strain ATCC 19397 / Type A).